Here is a 301-residue protein sequence, read N- to C-terminus: tRNA dimethylallyltransferase (301 aa).

5-12 (GPTASGKS) lines the ATP pocket. 7–12 (TASGKS) is a binding site for substrate. The segment at 30-33 (DSMQ) is interaction with substrate tRNA.

Belongs to the IPP transferase family. As to quaternary structure, monomer. The cofactor is Mg(2+).

The enzyme catalyses adenosine(37) in tRNA + dimethylallyl diphosphate = N(6)-dimethylallyladenosine(37) in tRNA + diphosphate. Its function is as follows. Catalyzes the transfer of a dimethylallyl group onto the adenine at position 37 in tRNAs that read codons beginning with uridine, leading to the formation of N6-(dimethylallyl)adenosine (i(6)A). The polypeptide is tRNA dimethylallyltransferase (Rhodopseudomonas palustris (strain TIE-1)).